The sequence spans 21 residues: Trypsin (21 aa).

This sequence belongs to the peptidase S1 family.

It localises to the secreted. The protein resides in the extracellular space. It catalyses the reaction Preferential cleavage: Arg-|-Xaa, Lys-|-Xaa.. The polypeptide is Trypsin (Apis mellifera scutellata (Africanized honey bee)).